We begin with the raw amino-acid sequence, 491 residues long: MATFKDACYHYKKLNKLNGLVLKLGANDAWRPAPVAKYKGWCLDCCQHTDLTYCRGCALFHVCQWCSRYNRCFLDEEPHLLRMRTFRNEINKEDVEGLINMYNIIFPINERVVDKFINNVKQRKCRNELLIEWYNHLLLPITLQALSIELEGDVYYIFGYYDCMGKENQTPFHFVNMINRYDRLLLDDKNFDRMMHLPVALQQEYALRYFSKSRFISQIKREMNRHDFSDNLMEERDNPMSFMQVTRNCVSAHMNDNDWNERCKLIGDARNYMELMKSAYTEHYSISNRCKLFTIYKLNIISKLVKPNYIFSNHGLCALDVNNCKWCKIDNHYEIWNDFRLRKIYNNMMNFIRALVKSNTNVGHCSSHELVYKCISSVFIVWKIEKWNDSVRTLFEYLEPVEINHVEYVLLDHELSWEMSGVIMQIMNGKVPRILSFDDVKKIMGAIIYDWFDVRYMRETPVIVSTTNELRKLNKDNNLMDGYDYELSDIE.

The RNA-binding stretch occupies residues 1–81; the sequence is MATFKDACYH…CFLDEEPHLL (81 aa). The segment at 42 to 79 is zinc-binding domain; the sequence is CLDCCQHTDLTYCRGCALFHVCQWCSRYNRCFLDEEPH. Residues 82–176 form an important for cytoskeleton localization region; that stretch reads RMRTFRNEIN…ENQTPFHFVN (95 aa). The tract at residues 320-491 is interaction with host IRF3; it reads DVNNCKWCKI…GYDYELSDIE (172 aa). Residues 485–488 carry the pLxIS motif motif; it reads YELS.

Belongs to the rotavirus NSP1 family. In terms of assembly, interacts (via C-terminus) with host IRF3; this interaction leads to IRF3 degradation. Interacts with host IRF7; this interaction leads to IRF7 degradation. Interacts with host CUL1 and CUL3.

The protein resides in the host cytoplasm. The protein localises to the host cytoskeleton. Plays a role in the inhibition of host innate immunity by inducing the degradation of key host factors required to activate interferon production such as IRF3, IRF5 or IRF7. Associates with components of cullin RING ligases (CRLs) including CUL1 or CUL3, which are essential multisubunit ubiquitination complexes, to modulate their activities. The chain is Non-structural protein 1 from Rotavirus A (isolate RVA/Cow/United States/B223/1983/G10P8[11]) (RV-A).